We begin with the raw amino-acid sequence, 896 residues long: DNA mismatch repair protein MutS (896 aa).

Residue 638–645 participates in ATP binding; it reads GPNMSGKS.

The protein belongs to the DNA mismatch repair MutS family.

Its function is as follows. This protein is involved in the repair of mismatches in DNA. It is possible that it carries out the mismatch recognition step. This protein has a weak ATPase activity. In Fusobacterium nucleatum subsp. nucleatum (strain ATCC 25586 / DSM 15643 / BCRC 10681 / CIP 101130 / JCM 8532 / KCTC 2640 / LMG 13131 / VPI 4355), this protein is DNA mismatch repair protein MutS.